Reading from the N-terminus, the 761-residue chain is NADP-dependent malic enzyme (761 aa).

The segment at 1-437 is malic enzyme; sequence MPGIDKTDRA…QLSARRDPIA (437 aa). The Proton donor role is filled by tyrosine 49. Lysine 104 (proton acceptor) is an active-site residue. A divalent metal cation-binding residues include glutamate 146, aspartate 147, and aspartate 172. NADP(+) contacts are provided by residues 205–208, asparagine 297, and asparagine 329; that span reads AGAA. The interval 438-761 is phosphate acetyltransferase; it reads STLQRIVERV…AAIAAYNAGT (324 aa).

In the N-terminal section; belongs to the malic enzymes family. This sequence in the C-terminal section; belongs to the phosphate acetyltransferase and butyryltransferase family. Homooctamer. Mg(2+) is required as a cofactor. Requires Mn(2+) as cofactor.

It catalyses the reaction (S)-malate + NADP(+) = pyruvate + CO2 + NADPH. The enzyme catalyses oxaloacetate + H(+) = pyruvate + CO2. The sequence is that of NADP-dependent malic enzyme (tme) from Rhizobium meliloti (strain 1021) (Ensifer meliloti).